Consider the following 545-residue polypeptide: Esterase-5B (545 aa).

The signal sequence occupies residues 1 to 19 (MYCEKLILLLGCFWISSSA). An intrachain disulfide couples Cys84 to Cys103. N-linked (GlcNAc...) asparagine glycosylation occurs at Asn113. Ser207 (acyl-ester intermediate) is an active-site residue. A disulfide bridge links Cys259 with Cys271. Asn421 is a glycosylation site (N-linked (GlcNAc...) asparagine). Catalysis depends on His467, which acts as the Charge relay system. Residue Asn507 is glycosylated (N-linked (GlcNAc...) asparagine). Cys515 and Cys536 are joined by a disulfide.

The protein belongs to the type-B carboxylesterase/lipase family. In terms of assembly, homodimer.

It localises to the secreted. It catalyses the reaction a carboxylic ester + H2O = an alcohol + a carboxylate + H(+). In Drosophila miranda (Fruit fly), this protein is Esterase-5B (Est-5B).